A 133-amino-acid chain; its full sequence is Interleukin-4 (133 aa).

Residues 1-24 (MGLTSQLIPMLVCLLACTSNFVHG) form the signal peptide. 3 disulfides stabilise this stretch: C27–C133, C48–C85, and C70–C105. N-linked (GlcNAc...) asparagine glycans are attached at residues N62, N96, and N102.

This sequence belongs to the IL-4/IL-13 family.

It localises to the secreted. Functionally, participates in at least several B-cell activation processes as well as of other cell types. It is a costimulator of DNA-synthesis. It induces the expression of class II MHC molecules on resting B-cells. It enhances both secretion and cell surface expression of IgE and IgG1. It also regulates the expression of the low affinity Fc receptor for IgE (CD23) on both lymphocytes and monocytes. Positively regulates IL31RA expression in macrophages. Stimulates autophagy in dendritic cells by interfering with mTORC1 signaling and through the induction of RUFY4. The sequence is that of Interleukin-4 (IL4) from Tursiops truncatus (Atlantic bottle-nosed dolphin).